The primary structure comprises 85 residues: Large ribosomal subunit protein bL27 (85 aa).

A disordered region spans residues 1–20 (MAHKKAGGSTRNGRDSESKR).

The protein belongs to the bacterial ribosomal protein bL27 family.

The polypeptide is Large ribosomal subunit protein bL27 (Azotobacter vinelandii (strain DJ / ATCC BAA-1303)).